A 208-amino-acid chain; its full sequence is MTQYIVALTGGIGSGKSTVANTFAALGVPLVDADVIAREVVQPESAALRAIVQRFGPAMLSADGSLDRAALRARIFSDPAEKTWLNGLLHPLIQRQTEQQLRSARAPYVLWVVPMLIENNLQQRANRVLVVDVDRERQIARTISRDGVSREQVENILAAQVSRQRRLACADDIIDNSGRPEEITDRVATLHQRYLALAASATRQDKSS.

The DPCK domain maps to 5-201; the sequence is IVALTGGIGS…QRYLALAASA (197 aa). 13-18 is a binding site for ATP; that stretch reads GSGKST.

This sequence belongs to the CoaE family.

The protein resides in the cytoplasm. The catalysed reaction is 3'-dephospho-CoA + ATP = ADP + CoA + H(+). The protein operates within cofactor biosynthesis; coenzyme A biosynthesis; CoA from (R)-pantothenate: step 5/5. Functionally, catalyzes the phosphorylation of the 3'-hydroxyl group of dephosphocoenzyme A to form coenzyme A. In Sodalis glossinidius (strain morsitans), this protein is Dephospho-CoA kinase.